We begin with the raw amino-acid sequence, 206 residues long: Large ribosomal subunit protein mL40 (206 aa).

Residues 1 to 46 (MATGVMLCAARALRPRSWIPGTCQAHVRHTHQRASLLAFWDLIPMR) constitute a mitochondrion transit peptide. Residues 170–189 (PFEKEGPHYTPPISNYQAPE) form a disordered region.

It belongs to the mitochondrion-specific ribosomal protein mL40 family. In terms of assembly, component of the mitochondrial ribosome large subunit (39S) which comprises a 16S rRNA and about 50 distinct proteins. In terms of tissue distribution, ubiquitous.

It is found in the mitochondrion. The sequence is that of Large ribosomal subunit protein mL40 (Mrpl40) from Mus musculus (Mouse).